A 273-amino-acid polypeptide reads, in one-letter code: 3-methyl-2-oxobutanoate hydroxymethyltransferase 3 (273 aa).

Mg(2+)-binding residues include Asp49 and Asp88. 3-methyl-2-oxobutanoate is bound by residues Asp49–Ser50, Asp88, and Lys118. Glu120 is a binding site for Mg(2+). Glu187 functions as the Proton acceptor in the catalytic mechanism.

It belongs to the PanB family. In terms of assembly, homodecamer; pentamer of dimers. Requires Mg(2+) as cofactor.

Its subcellular location is the cytoplasm. The enzyme catalyses 3-methyl-2-oxobutanoate + (6R)-5,10-methylene-5,6,7,8-tetrahydrofolate + H2O = 2-dehydropantoate + (6S)-5,6,7,8-tetrahydrofolate. Its pathway is cofactor biosynthesis; (R)-pantothenate biosynthesis; (R)-pantoate from 3-methyl-2-oxobutanoate: step 1/2. Catalyzes the reversible reaction in which hydroxymethyl group from 5,10-methylenetetrahydrofolate is transferred onto alpha-ketoisovalerate to form ketopantoate. The sequence is that of 3-methyl-2-oxobutanoate hydroxymethyltransferase 3 from Bradyrhizobium diazoefficiens (strain JCM 10833 / BCRC 13528 / IAM 13628 / NBRC 14792 / USDA 110).